Consider the following 507-residue polypeptide: Cytochrome P450 monooxygenase cloA (507 aa).

The chain crosses the membrane as a helical span at residues 15–35; that stretch reads WTWILLTTCIALTSPLVLKGI. The N-linked (GlcNAc...) asparagine glycan is linked to N247. Residue C450 coordinates heme.

This sequence belongs to the cytochrome P450 family. Heme is required as a cofactor.

Its subcellular location is the membrane. The protein operates within alkaloid biosynthesis; ergot alkaloid biosynthesis. Cytochrome P450 monooxygenase; part of the gene cluster that mediates the biosynthesis of fungal ergot alkaloid. DmaW catalyzes the first step of ergot alkaloid biosynthesis by condensing dimethylallyl diphosphate (DMAP) and tryptophan to form 4-dimethylallyl-L-tryptophan. The second step is catalyzed by the methyltransferase easF that methylates 4-dimethylallyl-L-tryptophan in the presence of S-adenosyl-L-methionine, resulting in the formation of 4-dimethylallyl-L-abrine. The catalase easC and the FAD-dependent oxidoreductase easE then transform 4-dimethylallyl-L-abrine to chanoclavine-I which is further oxidized by easD in the presence of NAD(+), resulting in the formation of chanoclavine-I aldehyde. Agroclavine dehydrogenase easG then mediates the conversion of chanoclavine-I aldehyde to agroclavine via a non-enzymatic adduct reaction: the substrate is an iminium intermediate that is formed spontaneously from chanoclavine-I aldehyde in the presence of glutathione. The presence of easA is not required to complete this reaction. Further conversion of agroclavine to paspalic acid is a two-step process involving oxidation of agroclavine to elymoclavine and of elymoclavine to paspalic acid, the second step being performed by the elymoclavine oxidase cloA. Paspalic acid is then further converted to D-lysergic acid. Ergopeptines are assembled from D-lysergic acid and three different amino acids by the D-lysergyl-peptide-synthetases composed each of a monomudular and a trimodular nonribosomal peptide synthetase subunit. LpsB and lpsC encode the monomodular subunits responsible for D-lysergic acid activation and incorporation into the ergopeptine backbone. LpsA1 and A2 subunits encode the trimodular nonribosomal peptide synthetase assembling the tripeptide portion of ergopeptines. LpsA1 is responsible for formation of the major ergopeptine, ergotamine, and lpsA2 for alpha-ergocryptine, the minor ergopeptine of the total alkaloid mixture elaborated by C.purpurea. D-lysergyl-tripeptides are assembled by the nonribosomal peptide synthetases and released as N-(D-lysergyl-aminoacyl)-lactams. Cyclolization of the D-lysergyl-tripeptides is performed by the Fe(2+)/2-ketoglutarate-dependent dioxygenase easH which introduces a hydroxyl group into N-(D-lysergyl-aminoacyl)-lactam at alpha-C of the aminoacyl residue followed by spontaneous condensation with the terminal lactam carbonyl group. In Claviceps purpurea (Ergot fungus), this protein is Cytochrome P450 monooxygenase cloA.